The primary structure comprises 778 residues: Endonuclease MutS2 (778 aa).

Residue 328 to 335 participates in ATP binding; sequence GPNTGGKT. In terms of domain architecture, Smr spans 702–777; the sequence is LDLRGKRYEE…GSGATIVTFK (76 aa).

This sequence belongs to the DNA mismatch repair MutS family. MutS2 subfamily. In terms of assembly, homodimer. Binds to stalled ribosomes, contacting rRNA.

Functionally, endonuclease that is involved in the suppression of homologous recombination and thus may have a key role in the control of bacterial genetic diversity. Its function is as follows. Acts as a ribosome collision sensor, splitting the ribosome into its 2 subunits. Detects stalled/collided 70S ribosomes which it binds and splits by an ATP-hydrolysis driven conformational change. Acts upstream of the ribosome quality control system (RQC), a ribosome-associated complex that mediates the extraction of incompletely synthesized nascent chains from stalled ribosomes and their subsequent degradation. Probably generates substrates for RQC. This is Endonuclease MutS2 from Streptococcus pneumoniae (strain ATCC 700669 / Spain 23F-1).